The sequence spans 348 residues: NADH-ubiquinone oxidoreductase chain 2 (348 aa).

Transmembrane regions (helical) follow at residues 2 to 22, 26 to 46, 55 to 75, 96 to 116, 149 to 169, 178 to 198, 199 to 219, 242 to 262, 276 to 296, and 323 to 343; these read SPYVFLIISISLFLGTSLTLF, WLMAWMGLEINTLAIIPMMTY, AAIKYFLTQATASMLVMFAII, VLMTLALAMKLGLAPFHFWVP, LNMKVLITLAFLSTMLGGWGG, ILAYSSIAHMGWMTIVMMINP, SLALLNLLIYIIATLTLFLML, TAILLTLLSLGGLPPLTGFMP, IIMATLMALSALLNLFFYMRI, and INIIPTLTIISSLLLPLTPLL.

Belongs to the complex I subunit 2 family. Core subunit of respiratory chain NADH dehydrogenase (Complex I) which is composed of 45 different subunits. Interacts with TMEM242.

Its subcellular location is the mitochondrion inner membrane. The catalysed reaction is a ubiquinone + NADH + 5 H(+)(in) = a ubiquinol + NAD(+) + 4 H(+)(out). In terms of biological role, core subunit of the mitochondrial membrane respiratory chain NADH dehydrogenase (Complex I) that is believed to belong to the minimal assembly required for catalysis. Complex I functions in the transfer of electrons from NADH to the respiratory chain. The immediate electron acceptor for the enzyme is believed to be ubiquinone. The chain is NADH-ubiquinone oxidoreductase chain 2 from Osphranter robustus (Wallaroo).